The primary structure comprises 75 residues: MQVKKIKKRKKVNFFQKNNIKYIDYKDIELLKKFISPNGQILPRRITGTSPKDQRQLALAIKRARQMALLPYVIE.

Belongs to the bacterial ribosomal protein bS18 family. Part of the 30S ribosomal subunit. Forms a tight heterodimer with protein bS6.

In terms of biological role, binds as a heterodimer with protein bS6 to the central domain of the 16S rRNA, where it helps stabilize the platform of the 30S subunit. This is Small ribosomal subunit protein bS18 from Mycoplasma mycoides subsp. mycoides SC (strain CCUG 32753 / NCTC 10114 / PG1).